We begin with the raw amino-acid sequence, 482 residues long: ATP synthase subunit beta (482 aa).

168–175 (GGAGVGKT) contributes to the ATP binding site.

Belongs to the ATPase alpha/beta chains family. In terms of assembly, F-type ATPases have 2 components, CF(1) - the catalytic core - and CF(0) - the membrane proton channel. CF(1) has five subunits: alpha(3), beta(3), gamma(1), delta(1), epsilon(1). CF(0) has three main subunits: a(1), b(2) and c(9-12). The alpha and beta chains form an alternating ring which encloses part of the gamma chain. CF(1) is attached to CF(0) by a central stalk formed by the gamma and epsilon chains, while a peripheral stalk is formed by the delta and b chains.

It is found in the cell membrane. It carries out the reaction ATP + H2O + 4 H(+)(in) = ADP + phosphate + 5 H(+)(out). In terms of biological role, produces ATP from ADP in the presence of a proton gradient across the membrane. The catalytic sites are hosted primarily by the beta subunits. This Nocardia farcinica (strain IFM 10152) protein is ATP synthase subunit beta.